We begin with the raw amino-acid sequence, 559 residues long: Nuclear envelope integral membrane protein (559 aa).

An N-terminal signal peptide occupies residues 1 to 15; sequence MRLLTLALLVAGSLA. N67, N81, and N114 each carry an N-linked (GlcNAc...) asparagine glycan. Helical transmembrane passes span 164–184, 192–212, 218–238, 267–287, and 290–310; these read YTSGCSFGLLASLLLVAFIVW, IGVPILIGGWSVSLYMLHFAW, IMIEYQKYVIGYFATVLLISM, LIYFSVQMVEVSTGTIGALII, and ICRGFLFAGIRWYFVGLKAVW. N-linked (GlcNAc...) asparagine glycosylation is found at N408 and N465. 2 disordered regions span residues 475-494 and 510-559; these read RRDSTPRHGNFQSEHRPRMP and KNGR…DADE. Positions 517–526 are enriched in polar residues; it reads PSSSTASGMT. The span at 530–539 shows a compositional bias: basic and acidic residues; the sequence is YMRKARRIDA.

Belongs to the NEMP family.

The protein resides in the nucleus inner membrane. Its function is as follows. Contributes to nuclear envelope stiffness in germ cells. Required for fertility. This Caenorhabditis elegans protein is Nuclear envelope integral membrane protein.